A 216-amino-acid chain; its full sequence is Elongation factor Ts (216 aa).

The tract at residues 80–83 (TDFV) is involved in Mg(2+) ion dislocation from EF-Tu.

It belongs to the EF-Ts family.

The protein localises to the cytoplasm. Associates with the EF-Tu.GDP complex and induces the exchange of GDP to GTP. It remains bound to the aminoacyl-tRNA.EF-Tu.GTP complex up to the GTP hydrolysis stage on the ribosome. The polypeptide is Elongation factor Ts (Alkaliphilus oremlandii (strain OhILAs) (Clostridium oremlandii (strain OhILAs))).